Reading from the N-terminus, the 1382-residue chain is DNA-directed RNA polymerase subunit beta (1382 aa).

It belongs to the RNA polymerase beta chain family. In terms of assembly, the RNAP catalytic core consists of 2 alpha, 1 beta, 1 beta' and 1 omega subunit. When a sigma factor is associated with the core the holoenzyme is formed, which can initiate transcription.

The catalysed reaction is RNA(n) + a ribonucleoside 5'-triphosphate = RNA(n+1) + diphosphate. Its function is as follows. DNA-dependent RNA polymerase catalyzes the transcription of DNA into RNA using the four ribonucleoside triphosphates as substrates. This is DNA-directed RNA polymerase subunit beta from Anaplasma marginale (strain Florida).